The following is a 719-amino-acid chain: Translation factor guf1, mitochondrial (719 aa).

The N-terminal 75 residues, 1–75 (MRGALCRPDV…TRCFSALRSL (75 aa)), are a transit peptide targeting the mitochondrion. The region spanning 119–301 (ERYRNFCIVA…AVISNVPAPV (183 aa)) is the tr-type G domain. GTP-binding positions include 128–135 (AHIDHGKS), 194–198 (DTPGH), and 248–251 (NKID).

This sequence belongs to the TRAFAC class translation factor GTPase superfamily. Classic translation factor GTPase family. LepA subfamily.

Its subcellular location is the mitochondrion inner membrane. It catalyses the reaction GTP + H2O = GDP + phosphate + H(+). Functionally, promotes mitochondrial protein synthesis. May act as a fidelity factor of the translation reaction, by catalyzing a one-codon backward translocation of tRNAs on improperly translocated ribosomes. Binds to mitochondrial ribosomes in a GTP-dependent manner. This Neurospora crassa (strain ATCC 24698 / 74-OR23-1A / CBS 708.71 / DSM 1257 / FGSC 987) protein is Translation factor guf1, mitochondrial (guf1).